Consider the following 416-residue polypeptide: Cysteate synthase (416 aa).

Residue K104 is modified to N6-(pyridoxal phosphate)lysine. N130 contributes to the pyridoxal 5'-phosphate binding site.

It belongs to the threonine synthase family. Cysteate synthase subfamily. As to quaternary structure, homotrimer. It depends on pyridoxal 5'-phosphate as a cofactor.

It catalyses the reaction O-phospho-L-serine + sulfite + H(+) = L-cysteate + phosphate. Its pathway is cofactor biosynthesis; coenzyme M biosynthesis. In terms of biological role, specifically catalyzes the beta-elimination of phosphate from L-phosphoserine and the beta-addition of sulfite to the dehydroalanine intermediate to produce L-cysteate. This Methanosarcina mazei (strain ATCC BAA-159 / DSM 3647 / Goe1 / Go1 / JCM 11833 / OCM 88) (Methanosarcina frisia) protein is Cysteate synthase.